A 434-amino-acid chain; its full sequence is Histidinol dehydrogenase (434 aa).

Residues Y130, Q188, and N211 each coordinate NAD(+). Residues S237, Q259, and H262 each contribute to the substrate site. The Zn(2+) site is built by Q259 and H262. Residues E326 and H327 each act as proton acceptor in the active site. The substrate site is built by H327, D360, E414, and H419. D360 lines the Zn(2+) pocket. Position 419 (H419) interacts with Zn(2+).

This sequence belongs to the histidinol dehydrogenase family. As to quaternary structure, homodimer. Zn(2+) is required as a cofactor.

The catalysed reaction is L-histidinol + 2 NAD(+) + H2O = L-histidine + 2 NADH + 3 H(+). It functions in the pathway amino-acid biosynthesis; L-histidine biosynthesis; L-histidine from 5-phospho-alpha-D-ribose 1-diphosphate: step 9/9. Functionally, catalyzes the sequential NAD-dependent oxidations of L-histidinol to L-histidinaldehyde and then to L-histidine. This is Histidinol dehydrogenase from Shigella flexneri.